We begin with the raw amino-acid sequence, 101 residues long: ATP-dependent Clp protease adapter protein ClpS (101 aa).

This sequence belongs to the ClpS family. As to quaternary structure, binds to the N-terminal domain of the chaperone ClpA.

Involved in the modulation of the specificity of the ClpAP-mediated ATP-dependent protein degradation. The chain is ATP-dependent Clp protease adapter protein ClpS from Mycobacterium bovis (strain ATCC BAA-935 / AF2122/97).